We begin with the raw amino-acid sequence, 171 residues long: MKTYRRQIREKILQALYTIEIRDTDIDSAAGWLLTEEILADPNAMKFFNMLLKNIKEHMEEIDRYIVKHTFNWDMSRIAIIDKNIIRMALTEILYCEDIPPKVSINEAIEIAKKFNSTDKSSKFVNGILDAIFNDLKNEGKVHKNGRGLIDQSVTKLQKVEGEGENPESAS.

The protein belongs to the NusB family.

In terms of biological role, involved in transcription antitermination. Required for transcription of ribosomal RNA (rRNA) genes. Binds specifically to the boxA antiterminator sequence of the ribosomal RNA (rrn) operons. This is Transcription antitermination protein NusB from Pelodictyon phaeoclathratiforme (strain DSM 5477 / BU-1).